The sequence spans 231 residues: Large ribosomal subunit protein uL1 (231 aa).

The protein belongs to the universal ribosomal protein uL1 family. In terms of assembly, part of the 50S ribosomal subunit.

In terms of biological role, binds directly to 23S rRNA. The L1 stalk is quite mobile in the ribosome, and is involved in E site tRNA release. Its function is as follows. Protein L1 is also a translational repressor protein, it controls the translation of the L11 operon by binding to its mRNA. This chain is Large ribosomal subunit protein uL1, found in Verminephrobacter eiseniae (strain EF01-2).